The sequence spans 317 residues: Nucleosome assembly protein 1;4 (317 aa).

The Nuclear export signal signature appears at 52-67 (LSPKVTKRVLFLKDIQ). Positions 214-219 (KKKTKK) match the Nuclear localization signal motif. Residues 297-317 (ALVDEDDSDDNDDDDNDEKSD) are disordered. A compositionally biased stretch (acidic residues) spans 298–317 (LVDEDDSDDNDDDDNDEKSD).

The protein belongs to the nucleosome assembly protein (NAP) family. As to quaternary structure, can form homomeric and heteromeric protein complexes with NAP1;1, NAP1;2 and NAP1;3. Binds histone H2A. Expressed in the root segment covering the apical end of the differentiation zone, the elongation zone of the root and the mature pollen within the anthers of open flowers.

Its subcellular location is the nucleus. It is found in the cytoplasm. May modulate chromatin structure by regulation of nucleosome assembly/disassembly. This is Nucleosome assembly protein 1;4 (NAP1;4) from Arabidopsis thaliana (Mouse-ear cress).